Here is a 390-residue protein sequence, read N- to C-terminus: S-adenosylmethionine synthase 4 (390 aa).

Glu-9 lines the Mg(2+) pocket. ATP is bound at residue His-15. Position 43 (Glu-43) interacts with K(+). 2 residues coordinate L-methionine: Glu-56 and Gln-99. ATP is bound by residues 167–169, 235–238, Asp-246, 252–253, Ala-269, Lys-273, and Lys-277; these read DGK, SGRF, and RK. Asp-246 is a binding site for L-methionine. L-methionine is bound at residue Lys-277.

This sequence belongs to the AdoMet synthase family. In terms of assembly, homotetramer. It depends on Mn(2+) as a cofactor. Requires Mg(2+) as cofactor. Co(2+) serves as cofactor. K(+) is required as a cofactor.

It is found in the cytoplasm. It carries out the reaction L-methionine + ATP + H2O = S-adenosyl-L-methionine + phosphate + diphosphate. The protein operates within amino-acid biosynthesis; S-adenosyl-L-methionine biosynthesis; S-adenosyl-L-methionine from L-methionine: step 1/1. Functionally, catalyzes the formation of S-adenosylmethionine from methionine and ATP. The reaction comprises two steps that are both catalyzed by the same enzyme: formation of S-adenosylmethionine (AdoMet) and triphosphate, and subsequent hydrolysis of the triphosphate. The sequence is that of S-adenosylmethionine synthase 4 (METK4) from Populus trichocarpa (Western balsam poplar).